Reading from the N-terminus, the 335-residue chain is Fructose-1,6-bisphosphatase class 1 (335 aa).

4 residues coordinate Mg(2+): Glu92, Asp114, Leu116, and Asp117. Residues Asp117–Ser120, Asn209, and Lys275 each bind substrate. Residue Glu281 coordinates Mg(2+).

This sequence belongs to the FBPase class 1 family. In terms of assembly, homotetramer. Mg(2+) is required as a cofactor.

The protein localises to the cytoplasm. The enzyme catalyses beta-D-fructose 1,6-bisphosphate + H2O = beta-D-fructose 6-phosphate + phosphate. It participates in carbohydrate biosynthesis; gluconeogenesis. The protein is Fructose-1,6-bisphosphatase class 1 of Delftia acidovorans (strain DSM 14801 / SPH-1).